A 338-amino-acid polypeptide reads, in one-letter code: UDP-glucose 4-epimerase (338 aa).

NAD(+)-binding positions include 11–12 (YI), 31–36 (DNLCNS), 58–59 (DI), 80–84 (FAGLK), asparagine 99, serine 124, tyrosine 149, lysine 153, and phenylalanine 178. Residues serine 124 and tyrosine 149 each coordinate substrate. Residue tyrosine 149 is the Proton acceptor of the active site. Substrate-binding positions include asparagine 179, 199–200 (NL), 216–218 (AIF), arginine 231, 292–295 (REGD), and tyrosine 299.

It belongs to the NAD(P)-dependent epimerase/dehydratase family. Homodimer. NAD(+) is required as a cofactor.

The enzyme catalyses UDP-alpha-D-glucose = UDP-alpha-D-galactose. The protein operates within carbohydrate metabolism; galactose metabolism. In terms of biological role, involved in the metabolism of galactose. Catalyzes the conversion of UDP-galactose (UDP-Gal) to UDP-glucose (UDP-Glc) through a mechanism involving the transient reduction of NAD. The sequence is that of UDP-glucose 4-epimerase (galE) from Yersinia pestis.